The primary structure comprises 436 residues: 3-ketoacyl-CoA thiolase (436 aa).

Catalysis depends on Cys99, which acts as the Acyl-thioester intermediate. Active-site proton acceptor residues include His392 and Cys422.

This sequence belongs to the thiolase-like superfamily. Thiolase family. Heterotetramer of two alpha chains (FadJ) and two beta chains (FadI).

The protein localises to the cytoplasm. It catalyses the reaction an acyl-CoA + acetyl-CoA = a 3-oxoacyl-CoA + CoA. It functions in the pathway lipid metabolism; fatty acid beta-oxidation. Catalyzes the final step of fatty acid oxidation in which acetyl-CoA is released and the CoA ester of a fatty acid two carbons shorter is formed. The protein is 3-ketoacyl-CoA thiolase of Citrobacter koseri (strain ATCC BAA-895 / CDC 4225-83 / SGSC4696).